The sequence spans 163 residues: Putative pre-16S rRNA nuclease (163 aa).

Belongs to the YqgF nuclease family.

The protein localises to the cytoplasm. Its function is as follows. Could be a nuclease involved in processing of the 5'-end of pre-16S rRNA. In Roseobacter denitrificans (strain ATCC 33942 / OCh 114) (Erythrobacter sp. (strain OCh 114)), this protein is Putative pre-16S rRNA nuclease.